A 545-amino-acid polypeptide reads, in one-letter code: Sulfite oxidase, mitochondrial (545 aa).

The transit peptide at 1 to 79 (MLLLHRAVVL…YQDHRCRAAQ (79 aa)) directs the protein to the mitochondrion. A Cytochrome b5 heme-binding domain is found at 82-161 (THIYTKEEVS…LAQYKIGELN (80 aa)). A heme b-binding site is contributed by histidine 118. At serine 123 the chain carries Phosphoserine. Histidine 143, glutamine 145, and histidine 147 together coordinate heme b. A hinge region spans residues 165-174 (KVAPTVETSD). The segment at 175 to 401 (PYADDPVRHP…YSHWQRRDYK (227 aa)) is moco domain. Mo-molybdopterin is bound by residues 215–219 (FTRNH), cysteine 264, aspartate 322, histidine 361, arginine 366, and 377–379 (HVK). The homodimerization stretch occupies residues 402–538 (GFSPSVDWET…RGVLSNAWHR (137 aa)).

As to quaternary structure, homodimer. Heme b serves as cofactor. The cofactor is Mo-molybdopterin.

It localises to the mitochondrion intermembrane space. The catalysed reaction is sulfite + O2 + H2O = sulfate + H2O2. Its pathway is energy metabolism; sulfur metabolism. Catalyzes the oxidation of sulfite to sulfate, the terminal reaction in the oxidative degradation of sulfur-containing amino acids. The polypeptide is Sulfite oxidase, mitochondrial (SUOX) (Homo sapiens (Human)).